The sequence spans 428 residues: Zinc-type alcohol dehydrogenase B (428 aa).

Residues cysteine 116, histidine 137, cysteine 167, cysteine 170, cysteine 173, and cysteine 181 each contribute to the Zn(2+) site. Position 393 is an N6-benzoyllysine (lysine 393).

The protein belongs to the zinc-containing alcohol dehydrogenase family. Class-III subfamily. In terms of assembly, homodimer. It depends on Zn(2+) as a cofactor. In terms of processing, benzoylation at lys-393 by gcnE leads to the activation od adhB.

The enzyme catalyses a primary alcohol + NAD(+) = an aldehyde + NADH + H(+). It catalyses the reaction a secondary alcohol + NAD(+) = a ketone + NADH + H(+). Functionally, zinc-type alcohol dehydrogenase involved in development, secondary metabolism, pathogenicity, and stress response. Specifically controls the formation of sclerotia and the biosynthesis of aflatoxin. Contribute to seed colonization of A flavus on host maize seed. This Aspergillus flavus (strain ATCC 200026 / FGSC A1120 / IAM 13836 / NRRL 3357 / JCM 12722 / SRRC 167) protein is Zinc-type alcohol dehydrogenase B.